The following is a 264-amino-acid chain: Glutamate racemase (264 aa).

Residues 11 to 12 (DS) and 43 to 44 (YG) each bind substrate. Cys74 acts as the Proton donor/acceptor in catalysis. 75–76 (NT) is a binding site for substrate. Cys193 (proton donor/acceptor) is an active-site residue. 194 to 195 (TH) is a binding site for substrate.

It belongs to the aspartate/glutamate racemases family.

The enzyme catalyses L-glutamate = D-glutamate. The protein operates within cell wall biogenesis; peptidoglycan biosynthesis. Provides the (R)-glutamate required for cell wall biosynthesis. The chain is Glutamate racemase from Bifidobacterium longum subsp. infantis (strain ATCC 15697 / DSM 20088 / JCM 1222 / NCTC 11817 / S12).